A 299-amino-acid chain; its full sequence is 33 kDa chaperonin (299 aa).

2 disulfide bridges follow: Cys-239/Cys-241 and Cys-272/Cys-275.

This sequence belongs to the HSP33 family. Post-translationally, under oxidizing conditions two disulfide bonds are formed involving the reactive cysteines. Under reducing conditions zinc is bound to the reactive cysteines and the protein is inactive.

The protein localises to the cytoplasm. In terms of biological role, redox regulated molecular chaperone. Protects both thermally unfolding and oxidatively damaged proteins from irreversible aggregation. Plays an important role in the bacterial defense system toward oxidative stress. This is 33 kDa chaperonin from Acaryochloris marina (strain MBIC 11017).